We begin with the raw amino-acid sequence, 192 residues long: Thiamine transporter ThiT (192 aa).

A run of 6 helical transmembrane segments spans residues 10–30 (LIEI…SGMF), 31–51 (LSMP…LISF), 57–77 (AGLT…NLFA), 81–101 (VQLL…GCFA), 123–143 (AVFI…AVFF), and 164–184 (YMVP…MTAP).

Belongs to the vitamin uptake transporter (VUT/ECF) (TC 2.A.88) family. Thiamine transporter subfamily. Forms a stable energy-coupling factor (ECF) transporter complex composed of a membrane-embedded substrate-binding protein (S component), two ATP-binding proteins (A components) and a transmembrane protein (T component).

The protein resides in the cell membrane. Its function is as follows. Probably a thiamine-binding protein that interacts with the energy-coupling factor (ECF) ABC-transporter complex. Unlike classic ABC transporters this ECF transporter provides the energy necessary to transport a number of different substrates. The substrates themselves are bound by transmembrane, not extracytoplasmic soluble proteins. This is Thiamine transporter ThiT (thiT) from Bacillus subtilis (strain 168).